The chain runs to 415 residues: Gamma-glutamyl phosphate reductase (415 aa).

This sequence belongs to the gamma-glutamyl phosphate reductase family.

Its subcellular location is the cytoplasm. It carries out the reaction L-glutamate 5-semialdehyde + phosphate + NADP(+) = L-glutamyl 5-phosphate + NADPH + H(+). It participates in amino-acid biosynthesis; L-proline biosynthesis; L-glutamate 5-semialdehyde from L-glutamate: step 2/2. Functionally, catalyzes the NADPH-dependent reduction of L-glutamate 5-phosphate into L-glutamate 5-semialdehyde and phosphate. The product spontaneously undergoes cyclization to form 1-pyrroline-5-carboxylate. In Dictyoglomus turgidum (strain DSM 6724 / Z-1310), this protein is Gamma-glutamyl phosphate reductase.